The sequence spans 510 residues: Probable allantoinase 2 (510 aa).

Histidine 97, histidine 99, lysine 185, histidine 228, histidine 287, and aspartate 360 together coordinate Zn(2+). At lysine 185 the chain carries N6-carboxylysine.

This sequence belongs to the metallo-dependent hydrolases superfamily. Allantoinase family. As to quaternary structure, homotetramer. The cofactor is Zn(2+). In terms of processing, carboxylation allows a single lysine to coordinate two zinc ions.

The enzyme catalyses (S)-allantoin + H2O = allantoate + H(+). Its pathway is nitrogen metabolism; (S)-allantoin degradation; allantoate from (S)-allantoin: step 1/1. The chain is Probable allantoinase 2 (allB2) from Dictyostelium discoideum (Social amoeba).